Reading from the N-terminus, the 130-residue chain is Small ribosomal subunit protein uS9 (130 aa).

The protein belongs to the universal ribosomal protein uS9 family.

This Pseudomonas syringae pv. tomato (strain ATCC BAA-871 / DC3000) protein is Small ribosomal subunit protein uS9.